The primary structure comprises 183 residues: NAD(P)H-quinone oxidoreductase subunit I, chloroplastic (183 aa).

4Fe-4S ferredoxin-type domains follow at residues glycine 55–glutamate 84 and threonine 95–glutamate 124. [4Fe-4S] cluster-binding residues include cysteine 64, cysteine 67, cysteine 70, cysteine 74, cysteine 104, cysteine 107, cysteine 110, and cysteine 114.

It belongs to the complex I 23 kDa subunit family. As to quaternary structure, NDH is composed of at least 16 different subunits, 5 of which are encoded in the nucleus. The cofactor is [4Fe-4S] cluster.

Its subcellular location is the plastid. It is found in the chloroplast thylakoid membrane. The enzyme catalyses a plastoquinone + NADH + (n+1) H(+)(in) = a plastoquinol + NAD(+) + n H(+)(out). It catalyses the reaction a plastoquinone + NADPH + (n+1) H(+)(in) = a plastoquinol + NADP(+) + n H(+)(out). In terms of biological role, NDH shuttles electrons from NAD(P)H:plastoquinone, via FMN and iron-sulfur (Fe-S) centers, to quinones in the photosynthetic chain and possibly in a chloroplast respiratory chain. The immediate electron acceptor for the enzyme in this species is believed to be plastoquinone. Couples the redox reaction to proton translocation, and thus conserves the redox energy in a proton gradient. In Huperzia lucidula (Shining clubmoss), this protein is NAD(P)H-quinone oxidoreductase subunit I, chloroplastic.